Here is an 801-residue protein sequence, read N- to C-terminus: tRNA(Met) cytidine acetyltransferase TmcA (801 aa).

ATP contacts are provided by residues Gln-228, 256-265 (GRGKSSAVGL), and Arg-412. The N-acetyltransferase domain occupies 457 to 637 (EELFLKNEEE…YTVIVVKPLS (181 aa)). Residues 562–564 (IAT), 569–575 (MGKGLGS), and Glu-602 contribute to the acetyl-CoA site.

The protein belongs to the RNA cytidine acetyltransferase family. TmcA subfamily.

It is found in the cytoplasm. It catalyses the reaction cytidine(34) in elongator tRNA(Met) + acetyl-CoA + ATP + H2O = N(4)-acetylcytidine(34) in elongator tRNA(Met) + ADP + phosphate + CoA + H(+). In terms of biological role, catalyzes the formation of N(4)-acetylcytidine (ac(4)C) at the wobble position of tRNA(Met), by using acetyl-CoA as an acetyl donor and ATP (or GTP). This chain is tRNA(Met) cytidine acetyltransferase TmcA, found in Thermofilum pendens (strain DSM 2475 / Hrk 5).